A 456-amino-acid polypeptide reads, in one-letter code: Bifunctional protein GlmU (456 aa).

The tract at residues 1 to 229 (MSNSAMSVVI…LSEVEGVNNR (229 aa)) is pyrophosphorylase. UDP-N-acetyl-alpha-D-glucosamine is bound by residues 11-14 (LAAG), K25, Q76, 81-82 (GT), 103-105 (YGD), G140, E154, N169, and N227. D105 contacts Mg(2+). N227 contributes to the Mg(2+) binding site. The interval 230–250 (LQLARLERVYQAEQAEKLLLA) is linker. The N-acetyltransferase stretch occupies residues 251 to 456 (GVMLRDPARF…QGWQRPVKKK (206 aa)). Residues R333 and K351 each coordinate UDP-N-acetyl-alpha-D-glucosamine. H363 (proton acceptor) is an active-site residue. The UDP-N-acetyl-alpha-D-glucosamine site is built by Y366 and N377. Acetyl-CoA-binding positions include A380, 386–387 (NY), S405, A423, and R440.

In the N-terminal section; belongs to the N-acetylglucosamine-1-phosphate uridyltransferase family. This sequence in the C-terminal section; belongs to the transferase hexapeptide repeat family. As to quaternary structure, homotrimer. Requires Mg(2+) as cofactor.

Its subcellular location is the cytoplasm. It carries out the reaction alpha-D-glucosamine 1-phosphate + acetyl-CoA = N-acetyl-alpha-D-glucosamine 1-phosphate + CoA + H(+). The catalysed reaction is N-acetyl-alpha-D-glucosamine 1-phosphate + UTP + H(+) = UDP-N-acetyl-alpha-D-glucosamine + diphosphate. The protein operates within nucleotide-sugar biosynthesis; UDP-N-acetyl-alpha-D-glucosamine biosynthesis; N-acetyl-alpha-D-glucosamine 1-phosphate from alpha-D-glucosamine 6-phosphate (route II): step 2/2. It functions in the pathway nucleotide-sugar biosynthesis; UDP-N-acetyl-alpha-D-glucosamine biosynthesis; UDP-N-acetyl-alpha-D-glucosamine from N-acetyl-alpha-D-glucosamine 1-phosphate: step 1/1. It participates in bacterial outer membrane biogenesis; LPS lipid A biosynthesis. Its function is as follows. Catalyzes the last two sequential reactions in the de novo biosynthetic pathway for UDP-N-acetylglucosamine (UDP-GlcNAc). The C-terminal domain catalyzes the transfer of acetyl group from acetyl coenzyme A to glucosamine-1-phosphate (GlcN-1-P) to produce N-acetylglucosamine-1-phosphate (GlcNAc-1-P), which is converted into UDP-GlcNAc by the transfer of uridine 5-monophosphate (from uridine 5-triphosphate), a reaction catalyzed by the N-terminal domain. The polypeptide is Bifunctional protein GlmU (Klebsiella pneumoniae subsp. pneumoniae (strain ATCC 700721 / MGH 78578)).